Reading from the N-terminus, the 545-residue chain is Esterase-5C (545 aa).

The N-terminal stretch at 1 to 19 (MLAARLIILLSFYWLSASA) is a signal peptide. The cysteines at positions 84 and 103 are disulfide-linked. N-linked (GlcNAc...) asparagine glycosylation occurs at Asn-113. Residue Ser-207 is the Acyl-ester intermediate of the active site. A disulfide bond links Cys-259 and Cys-271. N-linked (GlcNAc...) asparagine glycosylation occurs at Asn-421. Residue His-467 is the Charge relay system of the active site. A glycan (N-linked (GlcNAc...) asparagine) is linked at Asn-507. An intrachain disulfide couples Cys-515 to Cys-536.

It belongs to the type-B carboxylesterase/lipase family.

The protein localises to the secreted. The catalysed reaction is a carboxylic ester + H2O = an alcohol + a carboxylate + H(+). The protein is Esterase-5C (Est-5C) of Drosophila miranda (Fruit fly).